We begin with the raw amino-acid sequence, 160 residues long: Ribosomal RNA large subunit methyltransferase H (160 aa).

The S-adenosyl-L-methionine site is built by Leu-76 and Gly-108.

This sequence belongs to the RNA methyltransferase RlmH family. In terms of assembly, homodimer.

The protein resides in the cytoplasm. It carries out the reaction pseudouridine(1915) in 23S rRNA + S-adenosyl-L-methionine = N(3)-methylpseudouridine(1915) in 23S rRNA + S-adenosyl-L-homocysteine + H(+). Specifically methylates the pseudouridine at position 1915 (m3Psi1915) in 23S rRNA. The sequence is that of Ribosomal RNA large subunit methyltransferase H from Rhodopseudomonas palustris (strain HaA2).